The primary structure comprises 656 residues: Transcription factor CPH1 (656 aa).

A DNA-binding region spans residues 44–154 (NQVIRRYYLN…NVPHDKLMAD (111 aa)). The segment covering 205–242 (DAATSSTSNTATTLTDTGVSSGLNNTTSGGGSDSATST) has biased composition (low complexity). Disordered stretches follow at residues 205–289 (DAAT…ANSD) and 575–656 (QQQQ…QSQT). Residues 243-267 (HNNNEASTKPSNGSEKSSPEYTTTA) show a composition bias toward polar residues. 2 stretches are compositionally biased toward low complexity: residues 575–586 (QQQQQQQQQQQQ) and 600–609 (SFNNNKSLSS). The span at 628–642 (KTSYGSLNDVVNSKV) shows a compositional bias: polar residues. A compositionally biased stretch (basic and acidic residues) spans 646-656 (INKEEVKQSQT).

This sequence belongs to the STE12 transcription factor family.

Its subcellular location is the nucleus. Functionally, transcription factor involved in the formation of pseudohyphae and hyphae. It is likely to play a role in the developmental switch between yeast and mycelial forms. May be involved in a signal transduction system, strengthening the possibility of a sexual phase up to now undetected, and similar to that of the yeast mating pathway. This Candida albicans (strain SC5314 / ATCC MYA-2876) (Yeast) protein is Transcription factor CPH1 (CPH1).